The chain runs to 436 residues: GTPase Der (436 aa).

EngA-type G domains are found at residues 4–167 (PIVA…NKES) and 176–351 (IRLS…ENHK). Residues 10 to 17 (GKPNVGKS), 57 to 61 (DTGGI), 119 to 122 (NKVD), 182 to 189 (GRPNVGKS), 229 to 233 (DTAGM), and 294 to 297 (NKWD) each bind GTP. One can recognise a KH-like domain in the interval 352–436 (KRVQSSTLNE…PIHIIPRKRN (85 aa)).

It belongs to the TRAFAC class TrmE-Era-EngA-EngB-Septin-like GTPase superfamily. EngA (Der) GTPase family. As to quaternary structure, associates with the 50S ribosomal subunit.

GTPase that plays an essential role in the late steps of ribosome biogenesis. The chain is GTPase Der from Staphylococcus epidermidis (strain ATCC 35984 / DSM 28319 / BCRC 17069 / CCUG 31568 / BM 3577 / RP62A).